A 149-amino-acid polypeptide reads, in one-letter code: Prefoldin subunit alpha (149 aa).

Belongs to the prefoldin alpha subunit family. Heterohexamer of two alpha and four beta subunits.

Its subcellular location is the cytoplasm. Molecular chaperone capable of stabilizing a range of proteins. Seems to fulfill an ATP-independent, HSP70-like function in archaeal de novo protein folding. The sequence is that of Prefoldin subunit alpha from Methanoculleus marisnigri (strain ATCC 35101 / DSM 1498 / JR1).